The chain runs to 266 residues: Glucosamine-6-phosphate deaminase (266 aa).

Asp-72 serves as the catalytic Proton acceptor; for enolization step. Asp-141 acts as the For ring-opening step in catalysis. The active-site Proton acceptor; for ring-opening step is His-143. Glu-148 (for ring-opening step) is an active-site residue.

It belongs to the glucosamine/galactosamine-6-phosphate isomerase family. NagB subfamily. In terms of assembly, homohexamer.

The catalysed reaction is alpha-D-glucosamine 6-phosphate + H2O = beta-D-fructose 6-phosphate + NH4(+). It participates in amino-sugar metabolism; N-acetylneuraminate degradation; D-fructose 6-phosphate from N-acetylneuraminate: step 5/5. Allosterically activated by N-acetylglucosamine 6-phosphate (GlcNAc6P). Catalyzes the reversible isomerization-deamination of glucosamine 6-phosphate (GlcN6P) to form fructose 6-phosphate (Fru6P) and ammonium ion. The polypeptide is Glucosamine-6-phosphate deaminase (Salmonella arizonae (strain ATCC BAA-731 / CDC346-86 / RSK2980)).